The following is a 609-amino-acid chain: MADPIVHPGVHRPEFSAPLHARAEIIATLRAALGKPNTTLVGAAIGTGMAAQAASRGGADFILALNAGRLRSMGAPSIFSLLALRKSNDFVLDFAQSEILPFVKVPVFFGASAFDPRCSIEAELERIADAGFGAIVNFPTSIFLDGRFRADIEGAGLGFQRELEMLRAAQKRNMATLAYVRTVAEAQQAATAGVDIINLNLGWNVGGTVGSRTELSLRQAAEYAKIIFRQIRAISEDTLCVLEGGPIVSPDQMYEVSALSKADGYIGGSTIDRVPLEASMEQITSAFKSVGTLQKRIDELERQLEHVQREYSIVGRSPSIQQIKQRIEKLAASSLPVMITGQAGTGKKLLARGIHEAARRSGSKLISSEDASGESLFGFAPSEGGRKVLGLLQYHPKATLLIESVECLCVDAQERLIEVIETGAYRRLGDNERGRFEGRLILASTRPLPELGSSGQLIPALESRLAPGHVFLPPLCDRLEDLPLLAEHFLQALRKDRRSRKLSVDHSAYRVLMTYGWPENIRELRSVLETAAIRCEGDWIKSEHLPPLGDANADAPHPHPGEEREWILDALQRHRFRRGEAARYLGISRKTLYNKMRVYGLPLQPRERS.

The Sigma-54 factor interaction domain maps to 313–533 (IVGRSPSIQQ…LRSVLETAAI (221 aa)). 395 to 404 (HPKATLLIES) provides a ligand contact to ATP. Residues 578 to 597 (RGEAARYLGISRKTLYNKMR) constitute a DNA-binding region (H-T-H motif).

Functionally, probable transcriptional regulator that acts in conjunction with sigma-54. In Sinorhizobium fredii (strain NBRC 101917 / NGR234), this protein is Putative transcriptional regulatory protein y4pA.